The primary structure comprises 166 residues: Alanine racemase (166 aa).

Tyr-62 functions as the Proton acceptor; specific for L-alanine in the catalytic mechanism. Met-110 contacts substrate.

Belongs to the alanine racemase family. It depends on pyridoxal 5'-phosphate as a cofactor.

It catalyses the reaction L-alanine = D-alanine. It functions in the pathway amino-acid biosynthesis; D-alanine biosynthesis; D-alanine from L-alanine: step 1/1. Its function is as follows. Catalyzes the interconversion of L-alanine and D-alanine. May also act on other amino acids. The chain is Alanine racemase (alr) from Piscirickettsia salmonis.